Reading from the N-terminus, the 122-residue chain is Large ribosomal subunit protein uL14 (122 aa).

This sequence belongs to the universal ribosomal protein uL14 family. In terms of assembly, part of the 50S ribosomal subunit. Forms a cluster with proteins L3 and L19. In the 70S ribosome, L14 and L19 interact and together make contacts with the 16S rRNA in bridges B5 and B8.

In terms of biological role, binds to 23S rRNA. Forms part of two intersubunit bridges in the 70S ribosome. This chain is Large ribosomal subunit protein uL14, found in Thermomicrobium roseum (strain ATCC 27502 / DSM 5159 / P-2).